The sequence spans 554 residues: Hydroxylamine reductase (554 aa).

Residues C3, C6, C18, and C25 each coordinate [2Fe-2S] cluster. Hybrid [4Fe-2O-2S] cluster is bound by residues H252, E276, C320, C408, C436, C461, E495, and K497. C408 carries the cysteine persulfide modification.

This sequence belongs to the HCP family. [2Fe-2S] cluster serves as cofactor. The cofactor is hybrid [4Fe-2O-2S] cluster.

The protein resides in the cytoplasm. The catalysed reaction is A + NH4(+) + H2O = hydroxylamine + AH2 + H(+). Catalyzes the reduction of hydroxylamine to form NH(3) and H(2)O. The chain is Hydroxylamine reductase from Shewanella baltica (strain OS195).